Here is a 263-residue protein sequence, read N- to C-terminus: Shikimate dehydrogenase (NADP(+)) (263 aa).

Residues 16–18 (SKS) and threonine 65 contribute to the shikimate site. Residue lysine 69 is the Proton acceptor of the active site. Residues asparagine 90 and aspartate 105 each coordinate shikimate. Residues 125–129 (GAGGS), serine 181, and leucine 208 each bind NADP(+). A shikimate-binding site is contributed by tyrosine 210. NADP(+) is bound at residue glycine 230. A shikimate-binding site is contributed by glutamine 237.

The protein belongs to the shikimate dehydrogenase family. As to quaternary structure, homodimer.

The enzyme catalyses shikimate + NADP(+) = 3-dehydroshikimate + NADPH + H(+). The protein operates within metabolic intermediate biosynthesis; chorismate biosynthesis; chorismate from D-erythrose 4-phosphate and phosphoenolpyruvate: step 4/7. Functionally, involved in the biosynthesis of the chorismate, which leads to the biosynthesis of aromatic amino acids. Catalyzes the reversible NADPH linked reduction of 3-dehydroshikimate (DHSA) to yield shikimate (SA). This chain is Shikimate dehydrogenase (NADP(+)), found in Helicobacter pylori (strain ATCC 700392 / 26695) (Campylobacter pylori).